Here is a 1484-residue protein sequence, read N- to C-terminus: Cystic fibrosis transmembrane conductance regulator (1484 aa).

The Cytoplasmic portion of the chain corresponds to methionine 1–phenylalanine 77. A helical membrane pass occupies residues phenylalanine 78–glutamine 98. The 285-residue stretch at phenylalanine 81–leucine 365 folds into the ABC transmembrane type-1 1 domain. At proline 99 to tyrosine 122 the chain is on the extracellular side. A helical membrane pass occupies residues leucine 123 to histidine 146. Topologically, residues arginine 147–leucine 195 are cytoplasmic. A helical membrane pass occupies residues alanine 196–tryptophan 216. Over aspartate 217–serine 222 the chain is Extracellular. A helical membrane pass occupies residues alanine 223–methionine 243. At methionine 244–lysine 298 the chain is on the cytoplasmic side. A helical transmembrane segment spans residues alanine 299–phenylalanine 319. Over leucine 320–threonine 339 the chain is Extracellular. Residues isoleucine 340 to valine 358 traverse the membrane as a helical segment. The Cytoplasmic segment spans residues glutamine 359–serine 860. ATP contacts are provided by residues tryptophan 401, serine 434, glycine 458 to threonine 465, and glutamine 493. In terms of domain architecture, ABC transporter 1 spans asparagine 423–glycine 646. Cysteine 524 carries the S-palmitoyl cysteine lipid modification. 2 positions are modified to phosphoserine: serine 549 and serine 660. The interval serine 654–glutamate 833 is disordered R region. Residue serine 670 is modified to Phosphoserine; by PKA. Residue serine 686 is modified to Phosphoserine. Residue lysine 688 forms a Glycyl lysine isopeptide (Lys-Gly) (interchain with G-Cter in ubiquitin) linkage. Phosphoserine occurs at positions 700 and 712. Residue threonine 717 is modified to Phosphothreonine. Residues serine 737, serine 769, serine 792, serine 797, and serine 815 each carry the phosphoserine modification. The helical transmembrane segment at leucine 861 to valine 881 threads the bilayer. In terms of domain architecture, ABC transmembrane type-1 2 spans leucine 861–serine 1157. Residues valine 882–isoleucine 920 are Extracellular-facing. Residues asparagine 896 and asparagine 902 are each glycosylated (N-linked (GlcNAc...) asparagine). The chain crosses the membrane as a discontinuously helical span at residues tyrosine 921–histidine 941. Residues threonine 942 to threonine 992 are Cytoplasmic-facing. The helical transmembrane segment at isoleucine 993 to leucine 1013 threads the bilayer. Residues glutamine 1014–proline 1015 are Extracellular-facing. Residues tyrosine 1016–leucine 1036 traverse the membrane as a helical segment. Residues histidine 1037–threonine 1097 are Cytoplasmic-facing. A helical membrane pass occupies residues leucine 1098–phenylalanine 1118. Residues isoleucine 1119–glycine 1132 are Extracellular-facing. A helical transmembrane segment spans residues isoleucine 1133–isoleucine 1153. The Cytoplasmic portion of the chain corresponds to aspartate 1154 to leucine 1484. Residues methionine 1214–proline 1447 enclose the ABC transporter 2 domain. ATP-binding positions include tyrosine 1223 and glycine 1248–serine 1255. The interval arginine 1390–leucine 1484 is interaction with GORASP2. The S-palmitoyl cysteine moiety is linked to residue cysteine 1399. 2 positions are modified to phosphoserine: serine 1448 and serine 1460. The segment covering histidine 1456–arginine 1465 has biased composition (basic residues). The disordered stretch occupies residues histidine 1456–leucine 1484. The segment covering glutamate 1474–leucine 1484 has biased composition (acidic residues). A PDZ-binding motif is present at residues threonine 1482–leucine 1484.

Belongs to the ABC transporter superfamily. ABCC family. CFTR transporter (TC 3.A.1.202) subfamily. As to quaternary structure, monomer; does not require oligomerization for channel activity. May form oligomers in the membrane. Interacts with SLC26A3, SLC26A6 and NHERF1. Interacts with SHANK2. Interacts with MYO6. Interacts (via C-terminus) with GOPC (via PDZ domain); this promotes CFTR internalization and thereby decreases channel activity. Interacts with SLC4A7 through NHERF1. Found in a complex with MYO5B and RAB11A. Interacts with ANO1. Interacts with SLC26A8. Interacts with AHCYL1; the interaction increases CFTR activity. Interacts with CSE1L. The core-glycosylated form interacts with GORASP2 (via PDZ GRASP-type 1 domain) in respone to ER stress. Interacts with MARCHF2; the interaction leads to CFTR ubiqtuitination and degradation. Interacts with ADGRG2. N-glycosylated. Post-translationally, phosphorylated; cAMP treatment promotes phosphorylation and activates the channel. Dephosphorylation decreases the ATPase activity (in vitro). Phosphorylation at PKA sites activates the channel. Phosphorylation at PKC sites enhances the response to phosphorylation by PKA. Phosphorylated by AMPK; this inhibits channel activity. In terms of processing, ubiquitinated, leading to its degradation in the lysosome. Deubiquitination by USP10 in early endosomes enhances its endocytic recycling to the cell membrane. Ubiquitinated by RNF185 during ER stress. Ubiquitinated by MARCHF2.

It is found in the apical cell membrane. Its subcellular location is the early endosome membrane. It localises to the cell membrane. The protein resides in the recycling endosome membrane. The protein localises to the endoplasmic reticulum membrane. It is found in the nucleus. It carries out the reaction ATP + H2O + closed Cl(-) channel = ADP + phosphate + open Cl(-) channel.. The catalysed reaction is chloride(in) = chloride(out). The enzyme catalyses hydrogencarbonate(in) = hydrogencarbonate(out). It catalyses the reaction ATP + H2O = ADP + phosphate + H(+). Its function is as follows. Epithelial ion channel that plays an important role in the regulation of epithelial ion and water transport and fluid homeostasis. Mediates the transport of chloride ions across the cell membrane. Possesses an intrinsic ATPase activity and utilizes ATP to gate its channel; the passive flow of anions through the channel is gated by cycles of ATP binding and hydrolysis by the ATP-binding domains. The ion channel is also permeable to HCO(3)(-); selectivity depends on the extracellular chloride concentration. Exerts its function also by modulating the activity of other ion channels and transporters. Contributes to the regulation of the pH and the ion content of the epithelial fluid layer. Modulates the activity of the epithelial sodium channel (ENaC) complex, in part by regulating the cell surface expression of the ENaC complex. May regulate bicarbonate secretion and salvage in epithelial cells by regulating the transporter SLC4A7. Can inhibit the chloride channel activity of ANO1. Plays a role in the chloride and bicarbonate homeostasis during sperm epididymal maturation and capacitation. This is Cystic fibrosis transmembrane conductance regulator from Mustela putorius furo (European domestic ferret).